Reading from the N-terminus, the 514-residue chain is Threonine synthase (514 aa).

Lys124 is subject to N6-(pyridoxal phosphate)lysine. Residues Gly277, Asn278, Phe279, Asp281, and Thr449 each contribute to the pyridoxal 5'-phosphate site. A Phosphoserine modification is found at Ser467.

Belongs to the threonine synthase family. Pyridoxal 5'-phosphate serves as cofactor.

It catalyses the reaction O-phospho-L-homoserine + H2O = L-threonine + phosphate. It functions in the pathway amino-acid biosynthesis; L-threonine biosynthesis; L-threonine from L-aspartate: step 5/5. Its function is as follows. Catalyzes the gamma-elimination of phosphate from L-phosphohomoserine and the beta-addition of water to produce L-threonine. This is Threonine synthase (THR4) from Saccharomyces cerevisiae (strain ATCC 204508 / S288c) (Baker's yeast).